The chain runs to 332 residues: Mitoferrin-1 (332 aa).

Solcar repeat units lie at residues 31-119 (ASLG…IKRS), 129-213 (NSHI…MQEH), and 220-314 (YRPE…FKYF). The next 6 helical transmembrane spans lie at 33-52 (LGTH…TVMY), 94-113 (GLNI…FACY), 131-150 (HIAN…AVMN), 188-207 (SYST…FITY), 222-241 (PETH…AVTT), and 289-308 (GIQA…WSVY).

This sequence belongs to the mitochondrial carrier (TC 2.A.29) family. As to expression, highly expressed in hematopoietic organs, Expressed in the intermediate cell mass (ICM), a tissue equivalent to the mammalian extraembryonic yolk-sac blood islands. Colocalizes with gata1.

It localises to the mitochondrion inner membrane. It catalyses the reaction Fe(2+)(in) = Fe(2+)(out). Its function is as follows. Mitochondrial iron transporter that specifically mediates iron uptake in developing erythroid cells, thereby playing an essential role in heme biosynthesis. This chain is Mitoferrin-1 (slc25a37), found in Danio rerio (Zebrafish).